The sequence spans 141 residues: Phosphoribosyl-AMP cyclohydrolase (141 aa).

Residue Asp-91 coordinates Mg(2+). Cys-92 is a binding site for Zn(2+). Mg(2+) contacts are provided by Asp-93 and Asp-95. Residues Cys-110 and Cys-117 each coordinate Zn(2+).

This sequence belongs to the PRA-CH family. Homodimer. The cofactor is Mg(2+). Requires Zn(2+) as cofactor.

The protein localises to the cytoplasm. It catalyses the reaction 1-(5-phospho-beta-D-ribosyl)-5'-AMP + H2O = 1-(5-phospho-beta-D-ribosyl)-5-[(5-phospho-beta-D-ribosylamino)methylideneamino]imidazole-4-carboxamide. Its pathway is amino-acid biosynthesis; L-histidine biosynthesis; L-histidine from 5-phospho-alpha-D-ribose 1-diphosphate: step 3/9. Its function is as follows. Catalyzes the hydrolysis of the adenine ring of phosphoribosyl-AMP. This chain is Phosphoribosyl-AMP cyclohydrolase, found in Brucella anthropi (strain ATCC 49188 / DSM 6882 / CCUG 24695 / JCM 21032 / LMG 3331 / NBRC 15819 / NCTC 12168 / Alc 37) (Ochrobactrum anthropi).